The following is a 623-amino-acid chain: Glutathione import ATP-binding protein GsiA (623 aa).

ABC transporter domains are found at residues Val15–Leu269 and Leu314–Leu564. ATP is bound by residues Gly49–Ser56 and Gly357–Ser364.

This sequence belongs to the ABC transporter superfamily. Glutathione importer (TC 3.A.1.5.11) family. As to quaternary structure, the complex is composed of two ATP-binding proteins (GsiA), two transmembrane proteins (GsiC and GsiD) and a solute-binding protein (GsiB).

Its subcellular location is the cell inner membrane. The enzyme catalyses glutathione(out) + ATP + H2O = glutathione(in) + ADP + phosphate + H(+). Part of the ABC transporter complex GsiABCD involved in glutathione import. Responsible for energy coupling to the transport system. In Shigella flexneri serotype 5b (strain 8401), this protein is Glutathione import ATP-binding protein GsiA.